We begin with the raw amino-acid sequence, 307 residues long: Membrane protein insertase YidC 2 (307 aa).

Residues 1–23 form the signal peptide; the sequence is MKLTLNRILFSGLALSILLTLTG. Cys24 carries the N-palmitoyl cysteine lipid modification. Cys24 carries the S-diacylglycerol cysteine lipid modification. 5 helical membrane-spanning segments follow: residues 58–78, 135–155, 179–199, 209–225, and 231–251; these read LGYGLAIIIVTIIVRTLILPL, LGGIGCLPLLIQMPFFSAMYF, VLTAIIAALYFFQSWLSMMAV, TMMYTMPIMMIFMSFSL, and LYWLVGGFFSIIQQLITTYLL. A disordered region spans residues 263–307; it reads YAKNPPKAYQSTSSRKDVTPSQNMEQANLPKKIKSNRNAGKQRKR. Residues 271 to 288 show a composition bias toward polar residues; it reads YQSTSSRKDVTPSQNMEQ. Basic residues predominate over residues 293-307; that stretch reads KKIKSNRNAGKQRKR.

This sequence belongs to the OXA1/ALB3/YidC family. Type 2 subfamily.

Its subcellular location is the cell membrane. Its function is as follows. Required for the insertion and/or proper folding and/or complex formation of integral membrane proteins into the membrane. Involved in integration of membrane proteins that insert both dependently and independently of the Sec translocase complex, as well as at least some lipoproteins. This is Membrane protein insertase YidC 2 from Streptococcus pyogenes serotype M1.